The primary structure comprises 200 residues: Recombination protein RecR (200 aa).

The segment at 59 to 74 adopts a C4-type zinc-finger fold; that stretch reads CSTCGNIDSQNPCTVC. The Toprim domain maps to 82-177; it reads SIIVVVADVA…KVTRLAHGVP (96 aa).

It belongs to the RecR family.

May play a role in DNA repair. It seems to be involved in an RecBC-independent recombinational process of DNA repair. It may act with RecF and RecO. The protein is Recombination protein RecR of Rhodopseudomonas palustris (strain ATCC BAA-98 / CGA009).